Consider the following 228-residue polypeptide: Prolactin (228 aa).

Residues 1-29 (MGTKRSSLKGSLLLLLLMSSLFLFKSVES) form the signal peptide. A disulfide bond links Cys-33 and Cys-40. Phosphoserine occurs at positions 55, 63, and 119. 2 disulfides stabilise this stretch: Cys-87/Cys-203 and Cys-220/Cys-228.

Belongs to the somatotropin/prolactin family. Interacts with PRLR.

It is found in the secreted. In terms of biological role, prolactin acts primarily on the mammary gland by promoting lactation, mammogenesis, mitogenesis and osmoregulation. The protein is Prolactin (PRL) of Trichosurus vulpecula (Brush-tailed possum).